The following is a 1649-amino-acid chain: Formin-like protein 20 (1649 aa).

The Phosphatase tensin-type domain occupies 1–194 (MALFRRFFYK…QYISRRNLGS (194 aa)). Catalysis depends on C127, which acts as the Phosphocysteine intermediate. Positions 200-339 (DTPLLLDCLI…FKAEVLFSGA (140 aa)) constitute a C2 tensin-type domain. Disordered stretches follow at residues 416-774 (DCAS…PWKS) and 787-1245 (STSQ…QKKS). Over residues 421–483 (DSNHKHDMHA…RRTVEAKEND (63 aa)) the composition is skewed to basic and acidic residues. Composition is skewed to polar residues over residues 500 to 513 (LESMSQKTNTSLNK) and 585 to 597 (RINSAPASITTSL). Residues 598–616 (KDGKRATSPDGVIPKDAKT) show a composition bias toward basic and acidic residues. Over residues 648 to 662 (SLPPASPHQAPPPLP) the composition is skewed to pro residues. The span at 665-678 (TSEAKTVLHSSQAV) shows a compositional bias: polar residues. Pro residues-rich tracts occupy residues 680–691 (SPPPPPPPPPLP), 701–711 (LPPPPPPPPPF), 722–732 (LPPPPPPPPPF), 743–752 (LPPPPPPPLP), and 795–804 (SPTPPPPPPA). Residues 809 to 820 (GQKSSDLQTSQL) are compositionally biased toward polar residues. Composition is skewed to pro residues over residues 821–832 (PSPPPPPPPPPF), 843–854 (LPPPPPPPPPPF), and 865–874 (LPPPPPPPPW). Residues 878–890 (YASTFETHEACST) are compositionally biased toward polar residues. Composition is skewed to pro residues over residues 893-904 (SPPPPPPPPPFS), 944-960 (PSPPVKTAPPPPPPPPF), and 968-1213 (SPPP…PPPM). The 399-residue stretch at 1237–1635 (FGSAAQKKSS…KALKEAEMEK (399 aa)) folds into the FH2 domain.

The protein belongs to the formin-like family. Class-II subfamily.

This is Formin-like protein 20 (FH20) from Arabidopsis thaliana (Mouse-ear cress).